The primary structure comprises 1493 residues: Son of sevenless homolog (1493 aa).

The region spanning 244-448 is the DH domain; it reads TYESVAVDFL…ERVVGCVSDM (205 aa). The PH domain maps to 496–606; that stretch reads ELEKDGDLGM…WMAVLVKVTT (111 aa). Residues 656–824 form the N-terminal Ras-GEF domain; sequence GIPVIKCGTV…TILALIEKRV (169 aa). The Ras-GEF domain occupies 897-1164; it reads HPIEIGRQLT…YNKSLEIQPK (268 aa). Disordered regions lie at residues 1067-1091, 1165-1248, and 1263-1493; these read KSPP…DPEN, GLDT…DDAP, and HPKI…SSNK. Positions 1079-1088 are enriched in basic and acidic residues; that stretch reads QQKDDLKASD. 2 stretches are compositionally biased toward polar residues: residues 1208–1231 and 1279–1289; these read HSQN…NTPL and SRANQSNSVSL. Low complexity predominate over residues 1308–1326; it reads STATSPTTLTTTTTPSSAG. Polar residues predominate over residues 1350-1361; that stretch reads LTPSRDNSSPSA. A compositionally biased stretch (low complexity) spans 1381 to 1400; the sequence is STSSDVSSSPSTSGSTSSAT. Positions 1402–1417 are enriched in basic and acidic residues; the sequence is ENQEQLRVIFDREESH. The segment covering 1426-1435 has biased composition (pro residues); sequence PLPPALPPPR. The segment covering 1453-1464 has biased composition (polar residues); that stretch reads HNSNSPTLSSEQ.

Interacts with cmd-1 in the presence of Ca(2+).

Its function is as follows. Promotes the exchange of Ras-bound GDP by GTP. May regulate signaling pathways downstream of receptor tyrosine kinase, egl-15 and let-23. Required for larval and male spicule development, fluid homeostasis, vulva induction, spermatogenesis, and oogenesis by promoting meiosis prophase exit during oocyte maturation. Required for the delamination of G1 cell by promoting the loss of cell junctions and detachment from the excretory system during larval development. Plays a role in nicotinic acetylcholine receptor (nAChR)-mediated sensitivity to nicotine. Regulates synaptic levels of nAchR subunit lev-1 in the nerve cord. The protein is Son of sevenless homolog of Caenorhabditis elegans.